The sequence spans 138 residues: DNA-directed RNA polymerase subunit omega (138 aa).

Positions 117–138 (NLLGRDNFFSTPENRNTSNTDS) are disordered. Polar residues predominate over residues 124-138 (FFSTPENRNTSNTDS).

This sequence belongs to the RNA polymerase subunit omega family. The RNAP catalytic core consists of 2 alpha, 1 beta, 1 beta' and 1 omega subunit. When a sigma factor is associated with the core the holoenzyme is formed, which can initiate transcription.

It carries out the reaction RNA(n) + a ribonucleoside 5'-triphosphate = RNA(n+1) + diphosphate. Functionally, promotes RNA polymerase assembly. Latches the N- and C-terminal regions of the beta' subunit thereby facilitating its interaction with the beta and alpha subunits. This chain is DNA-directed RNA polymerase subunit omega, found in Ehrlichia canis (strain Jake).